The sequence spans 433 residues: Enolase (433 aa).

Gln167 lines the (2R)-2-phosphoglycerate pocket. The active-site Proton donor is the Glu209. Residues Asp246, Glu291, and Asp318 each contribute to the Mg(2+) site. (2R)-2-phosphoglycerate-binding residues include Lys343, Arg372, Ser373, and Lys394. Lys343 (proton acceptor) is an active-site residue.

This sequence belongs to the enolase family. In terms of assembly, component of the RNA degradosome, a multiprotein complex involved in RNA processing and mRNA degradation. Requires Mg(2+) as cofactor.

The protein resides in the cytoplasm. It is found in the secreted. Its subcellular location is the cell surface. The enzyme catalyses (2R)-2-phosphoglycerate = phosphoenolpyruvate + H2O. It participates in carbohydrate degradation; glycolysis; pyruvate from D-glyceraldehyde 3-phosphate: step 4/5. Functionally, catalyzes the reversible conversion of 2-phosphoglycerate (2-PG) into phosphoenolpyruvate (PEP). It is essential for the degradation of carbohydrates via glycolysis. The polypeptide is Enolase (Haemophilus ducreyi (strain 35000HP / ATCC 700724)).